Here is a 398-residue protein sequence, read N- to C-terminus: Succinate--CoA ligase [ADP-forming] subunit beta (398 aa).

The 246-residue stretch at 9–254 (KALLKSFGAP…KTEEDAKEIE (246 aa)) folds into the ATP-grasp domain. Residues Lys-46, 53–55 (GRG), Glu-109, Ala-112, and Glu-117 each bind ATP. The Mg(2+) site is built by Asn-209 and Asp-223. Residues Asn-274 and 331–333 (GIM) contribute to the substrate site.

It belongs to the succinate/malate CoA ligase beta subunit family. As to quaternary structure, heterotetramer of two alpha and two beta subunits. Requires Mg(2+) as cofactor.

The enzyme catalyses succinate + ATP + CoA = succinyl-CoA + ADP + phosphate. The catalysed reaction is GTP + succinate + CoA = succinyl-CoA + GDP + phosphate. It functions in the pathway carbohydrate metabolism; tricarboxylic acid cycle; succinate from succinyl-CoA (ligase route): step 1/1. Functionally, succinyl-CoA synthetase functions in the citric acid cycle (TCA), coupling the hydrolysis of succinyl-CoA to the synthesis of either ATP or GTP and thus represents the only step of substrate-level phosphorylation in the TCA. The beta subunit provides nucleotide specificity of the enzyme and binds the substrate succinate, while the binding sites for coenzyme A and phosphate are found in the alpha subunit. The polypeptide is Succinate--CoA ligase [ADP-forming] subunit beta (Allorhizobium ampelinum (strain ATCC BAA-846 / DSM 112012 / S4) (Agrobacterium vitis (strain S4))).